The following is a 258-amino-acid chain: NAD kinase (258 aa).

Residue D51 is the Proton acceptor of the active site. NAD(+)-binding positions include 51-52 (DG), 119-120 (ND), K130, D149, 160-165 (TAYSLS), and A184.

It belongs to the NAD kinase family. In terms of assembly, homodimer. Requires a divalent metal cation as cofactor.

Its subcellular location is the cytoplasm. The catalysed reaction is NAD(+) + ATP = ADP + NADP(+) + H(+). Functionally, involved in the regulation of the intracellular balance between NAD(H) and NADP(H), and is a key enzyme in the biosynthesis of NADP. Catalyzes specifically the phosphorylation on 2'-hydroxyl of the adenosine moiety of NAD to yield NADP. The polypeptide is NAD kinase (NADK) (Thermotoga maritima (strain ATCC 43589 / DSM 3109 / JCM 10099 / NBRC 100826 / MSB8)).